Here is a 223-residue protein sequence, read N- to C-terminus: Small ribosomal subunit protein uS3 (223 aa).

One can recognise a KH type-2 domain in the interval 39–117 (IREHLRKKPS…RPELNAKLVA (79 aa)).

It belongs to the universal ribosomal protein uS3 family. Part of the 30S ribosomal subunit. Forms a tight complex with proteins S10 and S14.

Its function is as follows. Binds the lower part of the 30S subunit head. Binds mRNA in the 70S ribosome, positioning it for translation. This Chlamydia felis (strain Fe/C-56) (Chlamydophila felis) protein is Small ribosomal subunit protein uS3.